Consider the following 305-residue polypeptide: UDP-3-O-acyl-N-acetylglucosamine deacetylase (305 aa).

Zn(2+) contacts are provided by H79, H238, and D242. H265 serves as the catalytic Proton donor.

Belongs to the LpxC family. The cofactor is Zn(2+).

It catalyses the reaction a UDP-3-O-[(3R)-3-hydroxyacyl]-N-acetyl-alpha-D-glucosamine + H2O = a UDP-3-O-[(3R)-3-hydroxyacyl]-alpha-D-glucosamine + acetate. Its pathway is glycolipid biosynthesis; lipid IV(A) biosynthesis; lipid IV(A) from (3R)-3-hydroxytetradecanoyl-[acyl-carrier-protein] and UDP-N-acetyl-alpha-D-glucosamine: step 2/6. Functionally, catalyzes the hydrolysis of UDP-3-O-myristoyl-N-acetylglucosamine to form UDP-3-O-myristoylglucosamine and acetate, the committed step in lipid A biosynthesis. This chain is UDP-3-O-acyl-N-acetylglucosamine deacetylase, found in Cronobacter sakazakii (strain ATCC BAA-894) (Enterobacter sakazakii).